The following is a 1143-amino-acid chain: AP-3 complex subunit delta (1143 aa).

HEAT repeat units lie at residues 129-166, 167-203, 205-242, 245-279, 280-317, 318-354, 356-389, and 416-455; these read DLAR…RYPE, SLRP…RNPK, YLPL…HEPR, KKLI…SDHI, PLMK…IHPK, AVSE…KKNI, DIVF…MGTY, and LIAS…PTEG. Disordered regions lie at residues 520-541, 634-692, 704-728, 741-792, and 829-899; these read KIPS…DQNE, QEPI…RHPI, KQAN…PENI, HVGA…NDAL, and KKNA…QAAA. Acidic residues predominate over residues 524-540; sequence LDDDDEEEEAQEEEDQN. Residues 526-550 adopt a coiled-coil conformation; it reads DDDEEEEAQEEEDQNEITHEIVQEC. Residues 653–662 show a composition bias toward basic residues; sequence HQKKHHKHHR. Residues 666 to 675 show a composition bias toward acidic residues; it reads DGDDDEDDET. The stretch at 814 to 835 forms a coiled coil; sequence TDIIKEKEREMAMLAKKNAKLS. The span at 840–849 shows a compositional bias: polar residues; the sequence is PSTANYSEVT. 2 stretches are compositionally biased toward low complexity: residues 854–867 and 881–899; these read APAK…AAGS and KPAA…QAAA. The GAE domain maps to 914-1016; sequence KTILDDDNFK…FTLLASPSSS (103 aa).

This sequence belongs to the adaptor complexes large subunit family. In terms of assembly, adaptor protein complex 3 (AP-3) is a heterotetramer composed of two large adaptins (delta-type subunit and beta-type subunit), a medium adaptin (mu-type subunit) and a small adaptin (sigma-type subunit).

The protein localises to the endosome membrane. Its function is as follows. Part of the AP-3 complex, an adaptor-related complex which is essential for the compartmentalization of the endocytic pathway. This chain is AP-3 complex subunit delta (ap3d1), found in Dictyostelium discoideum (Social amoeba).